Consider the following 100-residue polypeptide: Aspartyl/glutamyl-tRNA(Asn/Gln) amidotransferase subunit C (100 aa).

It belongs to the GatC family. Heterotrimer of A, B and C subunits.

The enzyme catalyses L-glutamyl-tRNA(Gln) + L-glutamine + ATP + H2O = L-glutaminyl-tRNA(Gln) + L-glutamate + ADP + phosphate + H(+). It catalyses the reaction L-aspartyl-tRNA(Asn) + L-glutamine + ATP + H2O = L-asparaginyl-tRNA(Asn) + L-glutamate + ADP + phosphate + 2 H(+). Allows the formation of correctly charged Asn-tRNA(Asn) or Gln-tRNA(Gln) through the transamidation of misacylated Asp-tRNA(Asn) or Glu-tRNA(Gln) in organisms which lack either or both of asparaginyl-tRNA or glutaminyl-tRNA synthetases. The reaction takes place in the presence of glutamine and ATP through an activated phospho-Asp-tRNA(Asn) or phospho-Glu-tRNA(Gln). This Staphylococcus haemolyticus (strain JCSC1435) protein is Aspartyl/glutamyl-tRNA(Asn/Gln) amidotransferase subunit C.